A 363-amino-acid polypeptide reads, in one-letter code: Flagellar P-ring protein 2 (363 aa).

A signal peptide spans 1 to 18 (MLIRLLLLVICLAGPGVA).

This sequence belongs to the FlgI family. In terms of assembly, the basal body constitutes a major portion of the flagellar organelle and consists of four rings (L,P,S, and M) mounted on a central rod.

The protein resides in the periplasm. It localises to the bacterial flagellum basal body. Its function is as follows. Assembles around the rod to form the L-ring and probably protects the motor/basal body from shearing forces during rotation. This is Flagellar P-ring protein 2 from Cereibacter sphaeroides (strain ATCC 17023 / DSM 158 / JCM 6121 / CCUG 31486 / LMG 2827 / NBRC 12203 / NCIMB 8253 / ATH 2.4.1.) (Rhodobacter sphaeroides).